A 587-amino-acid chain; its full sequence is 2-succinyl-5-enolpyruvyl-6-hydroxy-3-cyclohexene-1-carboxylate synthase (587 aa).

This sequence belongs to the TPP enzyme family. MenD subfamily. In terms of assembly, homodimer. The cofactor is Mg(2+). Mn(2+) is required as a cofactor. Thiamine diphosphate serves as cofactor.

The enzyme catalyses isochorismate + 2-oxoglutarate + H(+) = 5-enolpyruvoyl-6-hydroxy-2-succinyl-cyclohex-3-ene-1-carboxylate + CO2. Its pathway is quinol/quinone metabolism; 1,4-dihydroxy-2-naphthoate biosynthesis; 1,4-dihydroxy-2-naphthoate from chorismate: step 2/7. The protein operates within cofactor biosynthesis; phylloquinone biosynthesis. Its function is as follows. Catalyzes the thiamine diphosphate-dependent decarboxylation of 2-oxoglutarate and the subsequent addition of the resulting succinic semialdehyde-thiamine pyrophosphate anion to isochorismate to yield 2-succinyl-5-enolpyruvyl-6-hydroxy-3-cyclohexene-1-carboxylate (SEPHCHC). The chain is 2-succinyl-5-enolpyruvyl-6-hydroxy-3-cyclohexene-1-carboxylate synthase from Prochlorococcus marinus (strain MIT 9215).